The chain runs to 510 residues: NAD(P)H-quinone oxidoreductase subunit 2, chloroplastic (510 aa).

12 helical membrane passes run 24-44 (LLLFHGSFIFPECILIFGLIL), 59-79 (WFYFISSTSLVMSITALLFRW), 99-119 (IFQFLILLCSTLCIPLSVEYI), 124-144 (MAITEFLLFVLTATLGGMFLC), 149-169 (FITIFVAPECFSLCSYLLSGY), 183-203 (YLLMGGASSSILVHGFSWLYG), 229-249 (ISIALISITVGIGFKLSPAPF), 295-315 (WHLLLEILAILSMILGNLIAI), 323-343 (MLAYSSIGQIGYVIIGIIVGD), 347-367 (GYASMITYMLFYISMNLGTFA), 395-415 (ALSLALCLLSLGGLPPLAGFF), and 418-438 (LHLFWCGWQAGLYFLVSIGLL).

Belongs to the complex I subunit 2 family. In terms of assembly, NDH is composed of at least 16 different subunits, 5 of which are encoded in the nucleus.

It is found in the plastid. The protein resides in the chloroplast thylakoid membrane. It carries out the reaction a plastoquinone + NADH + (n+1) H(+)(in) = a plastoquinol + NAD(+) + n H(+)(out). The catalysed reaction is a plastoquinone + NADPH + (n+1) H(+)(in) = a plastoquinol + NADP(+) + n H(+)(out). Functionally, NDH shuttles electrons from NAD(P)H:plastoquinone, via FMN and iron-sulfur (Fe-S) centers, to quinones in the photosynthetic chain and possibly in a chloroplast respiratory chain. The immediate electron acceptor for the enzyme in this species is believed to be plastoquinone. Couples the redox reaction to proton translocation, and thus conserves the redox energy in a proton gradient. The sequence is that of NAD(P)H-quinone oxidoreductase subunit 2, chloroplastic from Phormium tenax (New Zealand flax).